The following is a 138-amino-acid chain: Mitochondrial import inner membrane translocase subunit tim-16 (138 aa).

The segment covering 32-43 has biased composition (low complexity); the sequence is TQQAAARHAAAT. Disordered stretches follow at residues 32–58 and 118–138; these read TQQAAARHAAATGQSPSETKENANANA and LSRLEQKSEENKEQQKENSKE. Positions 44–56 are enriched in polar residues; the sequence is GQSPSETKENANA. The J-like stretch occupies residues 66 to 119; sequence ESLQILNVKTPLNREDVEKHYEHLFAINDKAKGGTFYLQSKVYRAKERIDEELS.

This sequence belongs to the TIM16/PAM16 family. As to quaternary structure, probable component of the PAM complex at least composed of a mitochondrial HSP70 protein, GrpE, tim-44, tim-16 and tim-14. Associates with the TIM23 complex.

Its subcellular location is the mitochondrion inner membrane. Regulates ATP-dependent protein translocation into the mitochondrial matrix. The sequence is that of Mitochondrial import inner membrane translocase subunit tim-16 from Caenorhabditis briggsae.